The chain runs to 60 residues: uncharacterized protein (60 aa).

This is an uncharacterized protein from Lepidoptera (butterflies and moths).